The following is a 272-amino-acid chain: Probable feruloyl esterase C (272 aa).

Residues 1–22 form the signal peptide; sequence MLPTILYSAILALSALTPSALA.

This sequence belongs to the faeC family.

It is found in the secreted. The catalysed reaction is feruloyl-polysaccharide + H2O = ferulate + polysaccharide.. Involved in degradation of plant cell walls. Hydrolyzes the feruloyl-arabinose ester bond in arabinoxylans, and the feruloyl-galactose ester bond in pectin. Active against paranitrophenyl-acetate, methyl ferulate and wheat arabinoxylan. The protein is Probable feruloyl esterase C (faeC-1) of Aspergillus clavatus (strain ATCC 1007 / CBS 513.65 / DSM 816 / NCTC 3887 / NRRL 1 / QM 1276 / 107).